A 595-amino-acid polypeptide reads, in one-letter code: Epsin-2 (595 aa).

Positions 8, 11, 25, 30, 63, and 73 each coordinate a 1,2-diacyl-sn-glycero-3-phospho-(1D-myo-inositol-4,5-bisphosphate). In terms of domain architecture, ENTH spans 12-144 (NIVNNYSEAE…KDEERLKVER (133 aa)). A compositionally biased stretch (polar residues) spans 164–183 (NQITFGRGSSQPNLSTSYSE). Disordered regions lie at residues 164 to 254 (NQIT…RLRR), 267 to 289 (SRRD…PGSH), 305 to 396 (SGPV…KPSS), and 423 to 469 (TSKK…PESF). An Omega-N-methylarginine modification is found at Arg-170. 3 positions are modified to phosphoserine: Ser-173, Ser-192, and Ser-195. Composition is skewed to polar residues over residues 197–216 (HGST…PQTS) and 235–245 (EQSSESVQTAR). 2 consecutive UIM domains span residues 218-237 (EEEL…AEQS) and 255-274 (GDDL…TVKV). Positions 306–337 (GPVTQKTEPWSAGASANQTNPWGGTVAPSNIT) are enriched in polar residues. Tandem repeats lie at residues 313–315 (EPW), 325–327 (NPW), 338–340 (DPW), and 352–354 (DPW). Residues 313-389 (EPWSAGASAN…SNAGKTTDAW (77 aa)) are 6 X 3 AA repeats of [DE]-P-W. Positions 358–367 (TTASTQSVPK) are enriched in polar residues. Repeat unit 5 spans residues 370–372 (DPW). The segment covering 374 to 384 (ASQQPASNAGK) has biased composition (polar residues). Repeat 6 spans residues 387–389 (DAW). Ser-443 is subject to Phosphoserine. The span at 449-460 (SQSLTSASSKPS) shows a compositional bias: low complexity. Thr-465 bears the Phosphothreonine mark. 2 repeat units span residues 494 to 496 (NPF) and 508 to 510 (NPF). The segment at 494–593 (NPFLAPGAAA…AQSTGTTNPF (100 aa)) is 3 X 3 AA repeats of N-P-F. A Phosphoserine modification is found at Ser-526. Repeat 3 spans residues 591 to 593 (NPF).

This sequence belongs to the epsin family. Binds EPS15, AP-2 and clathrin. Interacts with UBQLN2. Interacts with ITSN1. Post-translationally, ubiquitinated.

The protein resides in the cytoplasm. Functionally, plays a role in the formation of clathrin-coated invaginations and endocytosis. This chain is Epsin-2 (Epn2), found in Mus musculus (Mouse).